Reading from the N-terminus, the 827-residue chain is MSQSSPSNAETDEDLSTTSSSSSFVPIEQHQIQDAIQVIDENKEFNKNILPYVVKTTPISSVGNNYHIISVFGSQSTGKSTLLNRLFNTNFDVMDESRRQQTTKGIWMAHSPQVSTTKQMDTHQENIFVMDVEGTDGRERGEDQDFERKAALFALATSEILIVNIWETQIGLYQGANMGLLKTVFEVNLTLFGKSKLEKNDHKVLLLIVIRDHVGLTPKENLSSTITQDLLKIWESLNKPAELAHLQFEDFFDTDFHTLRHKVLQPKEFLEDVNELGDRLVVKKDLFRPNYHHNIPIDGWTMYAENCWQQIDSNKDLDLPTQQILVAKFKCDEISASVYEEFHQKFKAISSANTPGISTLDYQDLGLLLVDLRSDTLENYDLSASRYTKSVYEQRKDLLKEKLNEKFREFFDAHIKHLSEKSVKEFETNIVGLKGKNFDKEATRLTRETTDYFINSAILLSLENELDYDVHVSNLQDQLTKLIQQQQLVELKNIVNKSIKKLSSGLTKAVSFELADPTETSWNNILSKFKEFVLDFLSKNELEEEAGTYDFGLGTNRAQNKEAVETFKFKSWNAFYEIIHKIISKDNLLTLLKDRFDDKFRYDENGLPRMYQNTVELETNFGISKSFALRIVPLLTIAKLNDNSEILPDYDIFDSKLRAKYLGLVENEHDSEDEEDEEDRCFAEIISESEKAEVLNKFKKETDARFIETKRSIVQHVTQIPYYIYLVIMVLGWNEFMAIVRNPLFFSLVLVFGAGLYILYSMNLLKPAMVVVQRLIDEIIAMAKEKMREFLIDDHPTQAHNLQKISASNREKVEEEKVVETIEMQDL.

The segment at 1 to 26 is disordered; that stretch reads MSQSSPSNAETDEDLSTTSSSSSFVP. Residues 1 to 719 lie on the Cytoplasmic side of the membrane; that stretch reads MSQSSPSNAE…KRSIVQHVTQ (719 aa). A GB1/RHD3-type G domain is found at 63-291; it reads GNNYHIISVF…VKKDLFRPNY (229 aa). GTP is bound at residue 73–80; it reads GSQSTGKS. Coiled-coil stretches lie at residues 389-409 and 472-492; these read KSVY…KFRE and VSNL…VELK. A helical transmembrane segment spans residues 720-740; it reads IPYYIYLVIMVLGWNEFMAIV. At 741-743 the chain is on the lumenal side; that stretch reads RNP. A helical membrane pass occupies residues 744-764; it reads LFFSLVLVFGAGLYILYSMNL. Topologically, residues 765 to 827 are cytoplasmic; that stretch reads LKPAMVVVQR…VVETIEMQDL (63 aa). Residues 803-823 are a coiled coil; it reads QKISASNREKVEEEKVVETIE.

This sequence belongs to the TRAFAC class dynamin-like GTPase superfamily. GB1/RHD3 GTPase family. RHD3 subfamily.

Its subcellular location is the endoplasmic reticulum membrane. Cooperates with the reticulon proteins and tubule-shaping DP1 family proteins to generate and maintain the structure of the tubular endoplasmic reticulum network. Has GTPase activity, which is required for its function in ER organization. The sequence is that of Protein SEY1 from Scheffersomyces stipitis (strain ATCC 58785 / CBS 6054 / NBRC 10063 / NRRL Y-11545) (Yeast).